A 122-amino-acid chain; its full sequence is Small ribosomal subunit protein uS13 (122 aa).

The interval 95 to 122 (GLPVRGQRTHTNARTRKGPAKSIAGKKK) is disordered.

This sequence belongs to the universal ribosomal protein uS13 family. In terms of assembly, part of the 30S ribosomal subunit. Forms a loose heterodimer with protein S19. Forms two bridges to the 50S subunit in the 70S ribosome.

Functionally, located at the top of the head of the 30S subunit, it contacts several helices of the 16S rRNA. In the 70S ribosome it contacts the 23S rRNA (bridge B1a) and protein L5 of the 50S subunit (bridge B1b), connecting the 2 subunits; these bridges are implicated in subunit movement. Contacts the tRNAs in the A and P-sites. The chain is Small ribosomal subunit protein uS13 from Nitrobacter winogradskyi (strain ATCC 25391 / DSM 10237 / CIP 104748 / NCIMB 11846 / Nb-255).